The following is a 289-amino-acid chain: Acetylglutamate kinase (289 aa).

Substrate-binding positions include 65-66, R87, and N187; that span reads GG.

This sequence belongs to the acetylglutamate kinase family. ArgB subfamily.

It is found in the cytoplasm. It carries out the reaction N-acetyl-L-glutamate + ATP = N-acetyl-L-glutamyl 5-phosphate + ADP. It functions in the pathway amino-acid biosynthesis; L-arginine biosynthesis; N(2)-acetyl-L-ornithine from L-glutamate: step 2/4. Catalyzes the ATP-dependent phosphorylation of N-acetyl-L-glutamate. The sequence is that of Acetylglutamate kinase from Chromobacterium violaceum (strain ATCC 12472 / DSM 30191 / JCM 1249 / CCUG 213 / NBRC 12614 / NCIMB 9131 / NCTC 9757 / MK).